The sequence spans 184 residues: Protein Iojap-related, mitochondrial (184 aa).

The N-terminal 39 residues, 1 to 39, are a transit peptide targeting the mitochondrion; sequence MLTTLRSRCSSLLLNQSWKLAPNRIFASSPSFSSSAGIS.

This sequence belongs to the Iojap/RsfS family.

It localises to the mitochondrion. Functionally, may be a ribosome silencing factor involved in organelle biogenesis and required for germination. In Arabidopsis thaliana (Mouse-ear cress), this protein is Protein Iojap-related, mitochondrial.